The following is a 246-amino-acid chain: UDP-N-acetyl-D-mannosaminuronic acid transferase (246 aa).

It belongs to the glycosyltransferase 26 family.

The catalysed reaction is UDP-N-acetyl-alpha-D-mannosaminouronate + N-acetyl-alpha-D-glucosaminyl-di-trans,octa-cis-undecaprenyl diphosphate = beta-D-ManNAcA-(1-&gt;4)-alpha-D-GlcNAc-di-trans,octa-cis-undecaprenyl diphosphate + UDP + H(+). It participates in bacterial outer membrane biogenesis; enterobacterial common antigen biosynthesis. In terms of biological role, catalyzes the synthesis of Und-PP-GlcNAc-ManNAcA (Lipid II), the second lipid-linked intermediate involved in enterobacterial common antigen (ECA) synthesis. The chain is UDP-N-acetyl-D-mannosaminuronic acid transferase from Shigella flexneri.